Reading from the N-terminus, the 388-residue chain is Protein FAM199X (388 aa).

A compositionally biased stretch (low complexity) spans 288-312 (SMVSSASSSGSSVGNSASNSSANMS). Residues 288–358 (SMVSSASSSG…QLKEQRQARK (71 aa)) form a disordered region. 2 positions are modified to phosphoserine: S316 and S321. The span at 330–349 (DSKKRSKQRKLQQKAFRKRQ) shows a compositional bias: basic residues.

The protein belongs to the FAM199 family.

This Mus musculus (Mouse) protein is Protein FAM199X (Fam199x).